Here is a 173-residue protein sequence, read N- to C-terminus: NADH dehydrogenase [ubiquinone] 1 alpha subcomplex assembly factor 4 (173 aa).

A lipid anchor (N-myristoyl glycine) is attached at glycine 2. A disordered region spans residues 16–40 (KRAEREISKRKPSMAPKHPSTRDLL). Serine 35 bears the Phosphoserine mark.

The protein belongs to the NDUFAF4 family. Binds calmodulin. Interacts with NDUFAF3. Phosphorylated on serine. Prolactin stimulate serine phosphorylation.

Its subcellular location is the mitochondrion. It is found in the membrane. May be involved in cell proliferation and survival of hormone-dependent tumor cells. Involved in the assembly of mitochondrial NADH:ubiquinone oxidoreductase complex (complex I). The polypeptide is NADH dehydrogenase [ubiquinone] 1 alpha subcomplex assembly factor 4 (Ndufaf4) (Mus musculus (Mouse)).